We begin with the raw amino-acid sequence, 513 residues long: NAD(P)H-quinone oxidoreductase subunit 2 (513 aa).

Transmembrane regions (helical) follow at residues 15–35 (VIWP…GDLI), 43–63 (WLPY…YFTW), 80–100 (LSIV…LMSI), 110–130 (LAEF…LSGA), 133–153 (LVMI…MTGY), 168–188 (LLIG…LYGL), 211–231 (LALA…ISAV), 245–265 (PTPV…ALAI), 281–301 (FIFI…ALAQ), 307–327 (MLAY…TAGT), 335–355 (IFYL…VILF), 379–399 (LCLS…GFFG), 401–421 (IYLF…VGLV), and 467–487 (VGIV…NPLF).

This sequence belongs to the complex I subunit 2 family. In terms of assembly, NDH-1 can be composed of about 15 different subunits; different subcomplexes with different compositions have been identified which probably have different functions.

The protein resides in the cellular thylakoid membrane. The enzyme catalyses a plastoquinone + NADH + (n+1) H(+)(in) = a plastoquinol + NAD(+) + n H(+)(out). It catalyses the reaction a plastoquinone + NADPH + (n+1) H(+)(in) = a plastoquinol + NADP(+) + n H(+)(out). Functionally, NDH-1 shuttles electrons from an unknown electron donor, via FMN and iron-sulfur (Fe-S) centers, to quinones in the respiratory and/or the photosynthetic chain. The immediate electron acceptor for the enzyme in this species is believed to be plastoquinone. Couples the redox reaction to proton translocation, and thus conserves the redox energy in a proton gradient. Cyanobacterial NDH-1 also plays a role in inorganic carbon-concentration. In Microcystis aeruginosa (strain NIES-843 / IAM M-2473), this protein is NAD(P)H-quinone oxidoreductase subunit 2.